The sequence spans 396 residues: Ribose-phosphate pyrophosphokinase 1, chloroplastic (396 aa).

The transit peptide at 1-36 (MPLSYSAAAAAAPSPLAARSRGLLRRPPRSSPVVVR) directs the protein to the chloroplast. Mg(2+) is bound by residues D204, H206, D215, and D219. Residues 290–305 (GKVAVMMDDMIDTAGT) form a binding of phosphoribosylpyrophosphate region.

It belongs to the ribose-phosphate pyrophosphokinase family. It depends on Mg(2+) as a cofactor.

It is found in the plastid. The protein localises to the chloroplast. The enzyme catalyses D-ribose 5-phosphate + ATP = 5-phospho-alpha-D-ribose 1-diphosphate + AMP + H(+). This Oryza sativa subsp. japonica (Rice) protein is Ribose-phosphate pyrophosphokinase 1, chloroplastic.